A 117-amino-acid polypeptide reads, in one-letter code: UPF0295 protein RBAM_008830 (117 aa).

The next 2 membrane-spanning stretches (helical) occupy residues 13 to 33 (TFAL…LFFK) and 41 to 61 (LFMI…FWIG).

The protein belongs to the UPF0295 family.

The protein localises to the cell membrane. This is UPF0295 protein RBAM_008830 from Bacillus velezensis (strain DSM 23117 / BGSC 10A6 / LMG 26770 / FZB42) (Bacillus amyloliquefaciens subsp. plantarum).